The sequence spans 278 residues: D-aminoacyl-tRNA deacylase (278 aa).

Belongs to the DtdA deacylase family. Monomer. Zn(2+) is required as a cofactor.

The enzyme catalyses a D-aminoacyl-tRNA + H2O = a tRNA + a D-alpha-amino acid + H(+). The catalysed reaction is glycyl-tRNA(Ala) + H2O = tRNA(Ala) + glycine + H(+). Functionally, D-aminoacyl-tRNA deacylase with broad substrate specificity. By recycling D-aminoacyl-tRNA to D-amino acids and free tRNA molecules, this enzyme counteracts the toxicity associated with the formation of D-aminoacyl-tRNA entities in vivo. This is D-aminoacyl-tRNA deacylase from Archaeoglobus fulgidus (strain ATCC 49558 / DSM 4304 / JCM 9628 / NBRC 100126 / VC-16).